The chain runs to 300 residues: DDRGK domain-containing protein 1 (300 aa).

Residues 1 to 2 lie on the Lumenal side of the membrane; it reads MD. The helical transmembrane segment at 3–23 threads the bilayer; it reads VVLYIAAAAILLVLIVFSVKI. At 24–300 the chain is on the cytoplasmic side; that stretch reads RGRTQDADVE…NLTPDIHSSA (277 aa). The segment at 28–173 is disordered; it reads QDADVEDHQN…RVKEEQERRE (146 aa). Acidic residues predominate over residues 78–90; the sequence is NEDSPVEADEDEE. Residues 112-173 are compositionally biased toward basic and acidic residues; that stretch reads KLEEKQARKA…RVKEEQERRE (62 aa). The UFM1-interacting motif (UFIM) signature appears at 183–197; sequence SFIIEDQGEAEELTE. One can recognise a PCI domain in the interval 217-261; that stretch reads VLLEDLASQFGLRTQDAIARLQDLIADGSLTGVIDDRGKFIFITP.

This sequence belongs to the DDRGK1 family. As to quaternary structure, component of the UFM1 ribosome E3 ligase (UREL) complex, composed of ufl1, ddrgk1 and cdk5rap3.

The protein resides in the endoplasmic reticulum membrane. Functionally, component of the UFM1 ribosome E3 ligase (UREL) complex, a multiprotein complex that catalyzes ufmylation of endoplasmic reticulum-docked proteins. The UREL complex plays a key role in ribosome recycling by mediating mono-ufmylation of the RPL26/uL24 subunit of the 60S ribosome following ribosome dissociation: ufmylation weakens the junction between post-termination 60S subunits and SEC61 translocons, promoting release and recycling of the large ribosomal subunit from the endoplasmic reticulum membrane. Ufmylation of RPL26/uL24 and subsequent 60S ribosome recycling either take place after normal termination of translation or after ribosome stalling during cotranslational translocation at the endoplasmic reticulum. Within the UREL complex, DDRGK1 tethers the complex to the endoplasmic reticulum membrane to restrict its activity to endoplasmic reticulum-docked ribosomes and acts as an ufmylation 'reader': following RPL26/uL24 ufmylation, DDRGK1 specifically binds to ufmylated RPL26/uL24 via its UFIM motif, resulting in stable association between the 60S ribosome and the UREL complex, followed by dissociation of the 60S ribosome subunit from the endoplasmic reticulum membrane. The UREL complex is also involved in reticulophagy in response to endoplasmic reticulum stress by promoting ufmylation of proteins such as CYB5R3 and RPN1, thereby promoting lysosomal degradation of ufmylated proteins. Plays a role in cartilage development through sox9, inhibiting the ubiquitin-mediated proteasomal degradation of this transcriptional regulator. Required for stabilization and ufmylation of ATG9A. The sequence is that of DDRGK domain-containing protein 1 from Danio rerio (Zebrafish).